The sequence spans 438 residues: Indole diterpene prenyltransferase janD (438 aa).

L-tryptophan is bound at residue 80–81; it reads FM. Positions 102, 190, 264, 266, 268, 350, 414, and 418 each coordinate substrate.

The protein belongs to the tryptophan dimethylallyltransferase family.

The protein operates within secondary metabolite biosynthesis. Its function is as follows. Indole diterpene prenyltransferase; part of the gene cluster that mediates the biosynthesis of the indole diterpenes janthitremanes such as shearinine K or shearinine A. The geranylgeranyl diphosphate (GGPP) synthase janG catalyzes the first step in janthitremane biosynthesis via conversion of farnesyl pyrophosphate and isopentyl pyrophosphate into geranylgeranyl pyrophosphate (GGPP). Condensation of indole-3-glycerol phosphate with GGPP by the prenyl transferase janC then forms 3-geranylgeranylindole (3-GGI). Epoxidation by the FAD-dependent monooxygenase janM leads to a epoxidized-GGI that is substrate of the terpene cyclase janB for cyclization to yield paspaline. Paspaline is subsequently converted to 13-desoxypaspaline by the cytochrome P450 monooxygenase janP, via beta-PC-M6 in a series of alpha-face oxidations. The cytochrome P450 monooxygenase janQ is proposed to carry out sequential beta-face oxidation steps at C-7 and C-13 of 13-desoxypaspaline to form paspalicine and paspalinine respectively. The indole diterpene prenyltransferase janD may then convert paspalinine into shearinine K which is substrate of janO and/or additional enzymes for oxidation and cyclization to generate shearinine A. The chain is Indole diterpene prenyltransferase janD from Penicillium janthinellum (Penicillium vitale).